The following is an 857-amino-acid chain: DNA mismatch repair protein MutS (857 aa).

603-610 is a binding site for ATP; that stretch reads GPNMAGKS.

The protein belongs to the DNA mismatch repair MutS family.

Its function is as follows. This protein is involved in the repair of mismatches in DNA. It is possible that it carries out the mismatch recognition step. This protein has a weak ATPase activity. The chain is DNA mismatch repair protein MutS from Methanothrix thermoacetophila (strain DSM 6194 / JCM 14653 / NBRC 101360 / PT) (Methanosaeta thermophila).